Consider the following 484-residue polypeptide: Protein nucleotidyltransferase YdiU (484 aa).

Glycine 81, glycine 83, arginine 84, lysine 103, aspartate 115, glycine 116, arginine 166, and arginine 173 together coordinate ATP. Aspartate 244 acts as the Proton acceptor in catalysis. Mg(2+) contacts are provided by asparagine 245 and aspartate 254. Residue aspartate 254 coordinates ATP.

This sequence belongs to the SELO family. The cofactor is Mg(2+). Mn(2+) serves as cofactor.

It catalyses the reaction L-seryl-[protein] + ATP = 3-O-(5'-adenylyl)-L-seryl-[protein] + diphosphate. It carries out the reaction L-threonyl-[protein] + ATP = 3-O-(5'-adenylyl)-L-threonyl-[protein] + diphosphate. The enzyme catalyses L-tyrosyl-[protein] + ATP = O-(5'-adenylyl)-L-tyrosyl-[protein] + diphosphate. The catalysed reaction is L-histidyl-[protein] + UTP = N(tele)-(5'-uridylyl)-L-histidyl-[protein] + diphosphate. It catalyses the reaction L-seryl-[protein] + UTP = O-(5'-uridylyl)-L-seryl-[protein] + diphosphate. It carries out the reaction L-tyrosyl-[protein] + UTP = O-(5'-uridylyl)-L-tyrosyl-[protein] + diphosphate. Nucleotidyltransferase involved in the post-translational modification of proteins. It can catalyze the addition of adenosine monophosphate (AMP) or uridine monophosphate (UMP) to a protein, resulting in modifications known as AMPylation and UMPylation. The protein is Protein nucleotidyltransferase YdiU of Shewanella baltica (strain OS223).